A 40-amino-acid chain; its full sequence is Photosystem II reaction center protein J (40 aa).

Residues 8 to 28 (IPLWLVALVAGTGVLVVVGLF) form a helical membrane-spanning segment.

This sequence belongs to the PsbJ family. As to quaternary structure, PSII is composed of 1 copy each of membrane proteins PsbA, PsbB, PsbC, PsbD, PsbE, PsbF, PsbH, PsbI, PsbJ, PsbK, PsbL, PsbM, PsbT, PsbX, PsbY, PsbZ, Psb30/Ycf12, peripheral proteins PsbO, CyanoQ (PsbQ), PsbU, PsbV and a large number of cofactors. It forms dimeric complexes.

The protein resides in the cellular thylakoid membrane. Functionally, one of the components of the core complex of photosystem II (PSII). PSII is a light-driven water:plastoquinone oxidoreductase that uses light energy to abstract electrons from H(2)O, generating O(2) and a proton gradient subsequently used for ATP formation. It consists of a core antenna complex that captures photons, and an electron transfer chain that converts photonic excitation into a charge separation. The chain is Photosystem II reaction center protein J from Trichodesmium erythraeum (strain IMS101).